A 549-amino-acid chain; its full sequence is Efflux pump patC (549 aa).

Polar residues predominate over residues 1 to 12; the sequence is MAESTAHTSPSL. Residues 1 to 40 form a disordered region; the sequence is MAESTAHTSPSLNDKEREVDQGILSDESGPAEEVKETPDQ. A run of 14 helical transmembrane segments spans residues 50-70, 85-105, 116-136, 146-166, 178-198, 206-226, 252-272, 282-302, 321-341, 360-380, 385-405, 419-439, 460-482, and 526-546; these read LLICIAVFSANLLYGLDNTIV, AQLGWLGVGFTLGSVVFILPL, WLFIGCLTMFAAGSALCGGAP, VWAGAGGAGMYLGNLNLITIL, LVGLIYGVGCILGPIIGGAFA, WGFYINLIIFGIMAPIYVFLL, VLSAGMHVSFILFIVFGGVMW, LYVVAAVTLIAFALSQYFCVL, IALYVLMACGGAALFVAVYYI, LLPFICFYVATILLCGWLMPK, VLWYLLSGIFMVIGSATMYTV, ILLGLGMATTQAAYAVGPSLV, LLGLAIASAIFQSETLSGLNALL, and VYVMAIAAGALYVIASCFLPW.

This sequence belongs to the major facilitator superfamily. TCR/Tet family.

The protein localises to the vacuole membrane. Its subcellular location is the cell membrane. Functionally, efflux pump; part of the gene cluster that mediates the biosynthesis of patulin, an acetate-derived tetraketide mycotoxin produced by several fungal species that shows antimicrobial properties against several bacteria. May be involved in the secretion of E-ascladiol to be converted to patulin by the secreted patulin synthase patE. The protein is Efflux pump patC of Aspergillus clavatus (strain ATCC 1007 / CBS 513.65 / DSM 816 / NCTC 3887 / NRRL 1 / QM 1276 / 107).